The sequence spans 110 residues: Flagellar hook-basal body complex protein FliE (110 aa).

It belongs to the FliE family.

Its subcellular location is the bacterial flagellum basal body. This Ralstonia nicotianae (strain ATCC BAA-1114 / GMI1000) (Ralstonia solanacearum) protein is Flagellar hook-basal body complex protein FliE.